The primary structure comprises 118 residues: Vesicle-associated membrane protein 1 (118 aa).

Residues 1 to 15 show a composition bias toward low complexity; the sequence is MSAPAQPPTEGAEGA. The segment at 1 to 36 is disordered; the sequence is MSAPAQPPTEGAEGAAPGGGPPGPPPNMTSNRRLQQ. The Cytoplasmic segment spans residues 1–96; sequence MSAPAQPPTE…KRKYWWKNCK (96 aa). Residues 33–93 form the v-SNARE coiled-coil homology domain; it reads RLQQTQAQVE…AKLKRKYWWK (61 aa). The residue at position 63 (S63) is a Phosphoserine. A helical; Anchor for type IV membrane protein transmembrane segment spans residues 97–116; the sequence is MMIMLGAICAIIVVVIVIYF. Topologically, residues 117-118 are vesicular; that stretch reads FA.

The protein belongs to the synaptobrevin family. As to quaternary structure, interacts with VAPA and VAPB.

The protein resides in the cytoplasmic vesicle. It localises to the secretory vesicle. Its subcellular location is the synaptic vesicle membrane. It is found in the synapse. The protein localises to the synaptosome. The protein resides in the cytoplasmic vesicle membrane. Its function is as follows. Involved in the targeting and/or fusion of transport vesicles to their target membrane. The polypeptide is Vesicle-associated membrane protein 1 (VAMP1) (Bos taurus (Bovine)).